The primary structure comprises 640 residues: Glycosyltransferase-like protein gnt14 (640 aa).

The Cytoplasmic segment spans residues 1–14 (MFGFKTTKNKKRVR). A helical; Signal-anchor for type II membrane protein membrane pass occupies residues 15–35 (LLVVAIGVMIFFMCLSNFSSI). The Extracellular portion of the chain corresponds to 36-640 (QSRQSSSTDT…TENCYSNDHW (605 aa)). 2 disordered regions span residues 63 to 184 (PSIN…PLSS) and 254 to 277 (NSNN…NNNY). Residues 65-171 (ININNSENNI…NININNNNKP (107 aa)) are compositionally biased toward low complexity. N-linked (GlcNAc...) asparagine glycosylation occurs at Asn68. N-linked (GlcNAc...) asparagine glycosylation is found at Asn410 and Asn539.

This sequence belongs to the glycosyltransferase 8 family. Highly divergent.

The protein resides in the membrane. This is Glycosyltransferase-like protein gnt14 (gnt14) from Dictyostelium discoideum (Social amoeba).